Consider the following 277-residue polypeptide: MHFFDRLADRIATADSVVSVGLDPDPARLPDSVLDADLPRWQFNRRIIDATHEHAACYKPNAAFYEDPDGWRALEETIAYAHGKNVPVLLDAKRGDIGNTARQYAQILDEDEGPAADAITVNPFLGRDSLEPFLQRADRGVFVLGRTSNPGGEDLQDLELASGEKLYERVVHLADLWNGNGNVGLVVGATNPDELEEIRELVPDIPFLVPGVGAQGGDAEAAVEHGLADGVGLVNSSRGIIFAGEDAATRRDDSGDAFFKAAGQSAKQLKQRLNQFR.

Residue K93 is the Proton donor of the active site.

Belongs to the OMP decarboxylase family. Type 2 subfamily.

The enzyme catalyses orotidine 5'-phosphate + H(+) = UMP + CO2. It functions in the pathway pyrimidine metabolism; UMP biosynthesis via de novo pathway; UMP from orotate: step 2/2. This is Orotidine 5'-phosphate decarboxylase from Haloarcula marismortui (strain ATCC 43049 / DSM 3752 / JCM 8966 / VKM B-1809) (Halobacterium marismortui).